The following is a 209-amino-acid chain: A-type ATP synthase subunit D (209 aa).

This sequence belongs to the V-ATPase D subunit family. Has multiple subunits with at least A(3), B(3), C, D, E, F, H, I and proteolipid K(x).

It localises to the cell membrane. In terms of biological role, component of the A-type ATP synthase that produces ATP from ADP in the presence of a proton gradient across the membrane. This chain is A-type ATP synthase subunit D, found in Thermoplasma volcanium (strain ATCC 51530 / DSM 4299 / JCM 9571 / NBRC 15438 / GSS1).